The sequence spans 1093 residues: MAFFSKFLNIKSTEMRIAEKSLKRINDLEKYVINNTDEELRSKTQFFKDLLKEGYKLEDIRDEVFAVAREATKRVLGKRPYDVQILGGILLDLGSVAEMKTGEGKTITSIAPVYLNALSGKGAIVSTVNEYLTERDAQEMGQVFNYLGLSVGINKAQMDPNLKRYAYSCDITYSVHSELGFDYLRDNMVSDMSEKVQRELNFCLIDEVDSILIDEAKTPLIISGGEANDSSSYYSADQFVRTLNNDDFLVDEESKAVTLTASGIEKANSFFRIDDLYNIEHSEKVHLIQNALRAHKVFKIDVEYIVKNNKIELVDAFTGRIMEGRSYSEGLQQAIQAKEMVEIEPETQTLATITYQNFFRMFNKLCGMTGTGKTEEQEFIDIYNMRVNVVPTNKPIAREDAPDLIFATAKDKWEAVGKEVERLYQKGQPVLVGTAQIEDSEIIHRILIEKNVPHTVLNAKQDKALEAEIIAQAGVKGAVTIATNMAGRGTDIKPSKEALELGGLYVLGTDKAESRRIDNQLRGRSGRQGDVGISRFYISLEDQLIMRFANFEAFQEVYAKDAGKEITNKQLRFAFNNAQKKIEGFNYDSRKSVLNYDDVIRQQRDLIYSQRDLLLISNEFEEIIRRMIKVFVKNLVAIEDHKLKSGAYDYQKLVDFLNKNIAVYIKHDFNVDEFKRIHDNELVDKVNQMVNDIYNQWLANAIEKTDQAYIDNFKKQVLLKTLDDNWKKHINKMDKLRSNVNLVQYSQKNPYQIYTDEGTKMFEDLIQTIAFESVLKVFSSPLGEKSLITAEIKNDPLYQQVASTFEYNPYLSISEQEKQLLERYNNVKQRLNEVEQQNLQEQSYKDPASDNLENNPEPKTGSQSQSEHEMVLTPDTVIDPSIDTNQWFEEINIDDFINVTKKDSELESKEKEQEEVKNQETQPKENKPAETKVDATKNQENVSEELKAKEVATVVEEKPKKVSKAKSEKLKVAKKVKPKDLESKEKPKSDKAKKSLAKKETQKPKKPKITSEVKIAKVEKTNKKAKAQDKPKAKVTKAKETKPKTEVKADKVKTKTAKTSEAKAQKVEAENFVNKIVFPKNKIDLKLEKIKLK.

Residues Q84, 102-106, and D491 each bind ATP; that span reads GEGKT. 2 disordered regions span residues 837 to 869 and 904 to 1062; these read QNLQEQSYKDPASDNLENNPEPKTGSQSQSEHE and SELE…TSEA. 3 stretches are compositionally biased toward basic and acidic residues: residues 904-937, 944-971, and 978-1062; these read SELESKEKEQEEVKNQETQPKENKPAETKVDATK, EELKAKEVATVVEEKPKKVSKAKSEKLK, and PKDL…TSEA.

It belongs to the SecA family. Monomer and homodimer. Part of the essential Sec protein translocation apparatus which comprises SecA, SecYEG and auxiliary proteins SecDF. Other proteins may also be involved.

It is found in the cell membrane. The protein localises to the cytoplasm. The enzyme catalyses ATP + H2O + cellular proteinSide 1 = ADP + phosphate + cellular proteinSide 2.. Functionally, part of the Sec protein translocase complex. Interacts with the SecYEG preprotein conducting channel. Has a central role in coupling the hydrolysis of ATP to the transfer of proteins into and across the cell membrane, serving as an ATP-driven molecular motor driving the stepwise translocation of polypeptide chains across the membrane. This is Protein translocase subunit SecA from Mycoplasmopsis synoviae (strain 53) (Mycoplasma synoviae).